Reading from the N-terminus, the 226-residue chain is ATP synthase F(0) complex subunit a (226 aa).

Helical transmembrane passes span 12–32 (PTMM…ILFP), 68–88 (WTLM…LGLL), 97–117 (QLSM…VTGF), 138–158 (IPML…ALAV), 164–184 (ITAG…LMSI), and 189–209 (ASIT…VALI).

Belongs to the ATPase A chain family. Component of the ATP synthase complex composed at least of ATP5F1A/subunit alpha, ATP5F1B/subunit beta, ATP5MC1/subunit c (homooctomer), MT-ATP6/subunit a, MT-ATP8/subunit 8, ATP5ME/subunit e, ATP5MF/subunit f, ATP5MG/subunit g, ATP5MK/subunit k, ATP5MJ/subunit j, ATP5F1C/subunit gamma, ATP5F1D/subunit delta, ATP5F1E/subunit epsilon, ATP5PF/subunit F6, ATP5PB/subunit b, ATP5PD/subunit d, ATP5PO/subunit OSCP. ATP synthase complex consists of a soluble F(1) head domain (subunits alpha(3) and beta(3)) - the catalytic core - and a membrane F(0) domain - the membrane proton channel (subunits c, a, 8, e, f, g, k and j). These two domains are linked by a central stalk (subunits gamma, delta, and epsilon) rotating inside the F1 region and a stationary peripheral stalk (subunits F6, b, d, and OSCP). Interacts with DNAJC30; interaction is direct.

Its subcellular location is the mitochondrion inner membrane. It carries out the reaction H(+)(in) = H(+)(out). Its function is as follows. Subunit a, of the mitochondrial membrane ATP synthase complex (F(1)F(0) ATP synthase or Complex V) that produces ATP from ADP in the presence of a proton gradient across the membrane which is generated by electron transport complexes of the respiratory chain. ATP synthase complex consist of a soluble F(1) head domain - the catalytic core - and a membrane F(1) domain - the membrane proton channel. These two domains are linked by a central stalk rotating inside the F(1) region and a stationary peripheral stalk. During catalysis, ATP synthesis in the catalytic domain of F(1) is coupled via a rotary mechanism of the central stalk subunits to proton translocation. With the subunit c (ATP5MC1), forms the proton-conducting channel in the F(0) domain, that contains two crucial half-channels (inlet and outlet) that facilitate proton movement from the mitochondrial intermembrane space (IMS) into the matrix. Protons are taken up via the inlet half-channel and released through the outlet half-channel, following a Grotthuss mechanism. In Dasypus novemcinctus (Nine-banded armadillo), this protein is ATP synthase F(0) complex subunit a.